Reading from the N-terminus, the 129-residue chain is Small ribosomal subunit protein uS9 (129 aa).

The protein belongs to the universal ribosomal protein uS9 family.

The polypeptide is Small ribosomal subunit protein uS9 (rps9) (Thermoplasma acidophilum (strain ATCC 25905 / DSM 1728 / JCM 9062 / NBRC 15155 / AMRC-C165)).